Here is a 252-residue protein sequence, read N- to C-terminus: Trans-aconitate 2-methyltransferase (252 aa).

This sequence belongs to the methyltransferase superfamily. Tam family.

The protein localises to the cytoplasm. The enzyme catalyses trans-aconitate + S-adenosyl-L-methionine = (E)-3-(methoxycarbonyl)pent-2-enedioate + S-adenosyl-L-homocysteine. Catalyzes the S-adenosylmethionine monomethyl esterification of trans-aconitate. The polypeptide is Trans-aconitate 2-methyltransferase (Escherichia coli (strain ATCC 8739 / DSM 1576 / NBRC 3972 / NCIMB 8545 / WDCM 00012 / Crooks)).